Consider the following 404-residue polypeptide: Putative glutamate--cysteine ligase 2 (404 aa).

The tract at residues 377-404 is disordered; sequence GPAGKRAHEGGRSFRPAAGAPMSIRGQE.

It belongs to the glutamate--cysteine ligase type 2 family. YbdK subfamily.

The enzyme catalyses L-cysteine + L-glutamate + ATP = gamma-L-glutamyl-L-cysteine + ADP + phosphate + H(+). In terms of biological role, ATP-dependent carboxylate-amine ligase which exhibits weak glutamate--cysteine ligase activity. The sequence is that of Putative glutamate--cysteine ligase 2 from Pseudomonas aeruginosa (strain UCBPP-PA14).